Here is a 539-residue protein sequence, read N- to C-terminus: Netrin-G1 (539 aa).

The first 28 residues, 1–28 (MYLSRFLSIHALWVTVSSVMQPYPLVWG), serve as a signal peptide directing secretion. Intrachain disulfides connect Cys-33–Cys-50, Cys-72–Cys-92, and Cys-80–Cys-88. The 251-residue stretch at 46–296 (DYMACQPEST…AISDIKVRGR (251 aa)) folds into the Laminin N-terminal domain. Residues 80–91 (CAMGNPYMCNNE) form an NGL discriminant loop I region. N-linked (GlcNAc...) asparagine glycosylation is present at Asn-133. A disulfide bridge links Cys-182 with Cys-206. The segment at 208-214 (EEYSTGY) is NGL discriminant loop II. The segment at 273–275 (EIF) is NGL discriminant loop III. Cystine bridges form between Cys-297/Cys-306, Cys-299/Cys-315, Cys-317/Cys-326, Cys-329/Cys-354, Cys-364/Cys-373, Cys-366/Cys-384, Cys-387/Cys-396, Cys-399/Cys-417, Cys-420/Cys-432, Cys-422/Cys-438, Cys-440/Cys-449, Cys-452/Cys-462, Cys-467/Cys-480, Cys-474/Cys-486, and Cys-488/Cys-497. Laminin EGF-like domains follow at residues 297 to 356 (CKCN…TCIP), 364 to 419 (CECF…VCIE), and 420 to 469 (CYCN…VCDN). A glycan (N-linked (GlcNAc...) asparagine) is linked at Asn-320. Asn-406 carries an N-linked (GlcNAc...) asparagine glycan. A glycan (N-linked (GlcNAc...) asparagine) is linked at Asn-433. Residue Ser-510 is the site of GPI-anchor amidated serine attachment. A propeptide spans 511-539 (DSGQGAPPHGSPALLLLTTLLGTASPLVF) (removed in mature form).

Interacts with NGL1. In terms of processing, N-glycosylated. As to expression, highly expressed in the thalamus, with very low expression, if any, in other tissues.

Its subcellular location is the cell membrane. Its function is as follows. Involved in controlling patterning and neuronal circuit formation at the laminar, cellular, subcellular and synaptic levels. Promotes neurite outgrowth of both axons and dendrites. This is Netrin-G1 (NTNG1) from Homo sapiens (Human).